The chain runs to 268 residues: Interferon alpha/beta receptor 2 (268 aa).

Residues 1–16 (MGPWTLLLLHLPLVVS) form the signal peptide. Residues 17-223 (MLPAPTNVSI…TSPTAANTVP (207 aa)) are Extracellular-facing. Fibronectin type-III domains lie at 18 to 114 (LPAP…LTDT) and 115 to 217 (LLGP…TSPT). 2 disulfides stabilise this stretch: cysteine 65–cysteine 74 and cysteine 191–cysteine 211. Residues 224-244 (VVLSVLCAFSLLVVLLCGIVV) form a helical membrane-spanning segment. Topologically, residues 245–268 (YSGRLLCMHKPLPKTLSSVPLCGG) are cytoplasmic.

Belongs to the type II cytokine receptor family. In terms of assembly, heterodimer with IFNAR1; forming the receptor for type I interferon.

The protein localises to the cell membrane. It is found in the cytoplasm. In terms of biological role, together with IFNAR1, forms the heterodimeric receptor for type I interferons (including interferons alpha, beta, epsilon, omega and kappa). Type I interferon binding activates the JAK-STAT signaling cascade, resulting in transcriptional activation or repression of interferon-regulated genes that encode the effectors of the interferon response. Mechanistically, type I interferon-binding brings the IFNAR1 and IFNAR2 subunits into close proximity with one another, driving their associated Janus kinases (JAKs) (TYK2 bound to IFNAR1 and JAK1 bound to IFNAR2) to cross-phosphorylate one another. The activated kinases phosphorylate specific tyrosine residues on the intracellular domains of IFNAR1 and IFNAR2, forming docking sites for the STAT transcription factors (STAT1, STAT2 and STAT). STAT proteins are then phosphorylated by the JAKs, promoting their translocation into the nucleus to regulate expression of interferon-regulated genes. This chain is Interferon alpha/beta receptor 2, found in Oncorhynchus mykiss (Rainbow trout).